The sequence spans 406 residues: Vacuole membrane protein 1 (406 aa).

The residue at position 2 (A2) is an N-acetylalanine. The Cytoplasmic segment spans residues 2-43 (AENGQNCDQRRVAMNKEQYNGNFTDPSSVNEKKRRDREERQN). A helical membrane pass occupies residues 44 to 63 (IVLWRQPLITLQYFSLETLV). Residues 64–77 (ILKEWTSKLWHRQS) lie on the Extracellular side of the membrane. A helical transmembrane segment spans residues 78-98 (IVVSFLLLLAVLTATYYVEGA). Residues 99–109 (HQQYVQRIEKQ) lie on the Cytoplasmic side of the membrane. The chain crosses the membrane as a helical span at residues 110–130 (FLLYAYWIGLGILSSVGLGTG). Over 131-250 (LHTFLLYLGP…ASRAKLAVQN (120 aa)) the chain is Extracellular. Positions 173–316 (GTEGTISLWS…FVIVAFSKHI (144 aa)) are VTT domain. Residues 251-271 (LVQKVGFFGILACASIPNPLF) traverse the membrane as a helical segment. Over 272-273 (DL) the chain is Cytoplasmic. The helical transmembrane segment at 274-294 (AGITCGHFLVPFWTFFGATLI) threads the bilayer. Topologically, residues 295-306 (GKAIIKMHIQKL) are extracellular. Residues 307-327 (FVIVAFSKHIVEQMVAFIGAV) form a helical membrane-spanning segment. The Cytoplasmic segment spans residues 328-363 (PGIGPSLQKPFQEYLEAQRQKLHHRSEMGTPQGENW). A helical transmembrane segment spans residues 364–384 (LSWMFEKLVVVMVCYFILSII). Residues 385–406 (NSMAQSYAKRIQQRLDPKEKTK) are Extracellular-facing.

It belongs to the VMP1 family. Interacts with BECN1. Interacts with TJP1. Interacts with TP53INP2. Interacts with TMEM41B. Interacts with ATP2A2, PLN and SLN; competes with PLN and SLN to prevent them from forming an inhibitory complex with ATP2A2. Interacts with ATG2A.

The protein localises to the endoplasmic reticulum-Golgi intermediate compartment membrane. It is found in the cell membrane. The protein resides in the vacuole membrane. It localises to the endoplasmic reticulum membrane. It carries out the reaction a 1,2-diacyl-sn-glycero-3-phospho-L-serine(in) = a 1,2-diacyl-sn-glycero-3-phospho-L-serine(out). The catalysed reaction is cholesterol(in) = cholesterol(out). The enzyme catalyses a 1,2-diacyl-sn-glycero-3-phosphocholine(in) = a 1,2-diacyl-sn-glycero-3-phosphocholine(out). It catalyses the reaction a 1,2-diacyl-sn-glycero-3-phosphoethanolamine(in) = a 1,2-diacyl-sn-glycero-3-phosphoethanolamine(out). Functionally, phospholipid scramblase involved in lipid homeostasis and membrane dynamics processes. Has phospholipid scramblase activity toward cholesterol and phosphatidylserine, as well as phosphatidylethanolamine and phosphatidylcholine. Required for autophagosome formation: participates in early stages of autophagosome biogenesis at the endoplasmic reticulum (ER) membrane by reequilibrating the leaflets of the ER as lipids are extracted by ATG2 (ATG2A or ATG2B) to mediate autophagosome assembly. Regulates ATP2A2 activity to control ER-isolation membrane contacts for autophagosome formation. In addition to autophagy, involved in other processes in which phospholipid scramblase activity is required. Modulates ER contacts with lipid droplets, mitochondria and endosomes. Plays an essential role in formation of cell junctions. Upon stress such as bacterial and viral infection, promotes formation of cytoplasmic vacuoles followed by cell death. Involved in the cytoplasmic vacuolization of acinar cells during the early stage of acute pancreatitis. This Bos taurus (Bovine) protein is Vacuole membrane protein 1.